A 557-amino-acid polypeptide reads, in one-letter code: MTDNNKYRDVEIRAPRGNKLTAKSWLTEAPLRMLMNNLDPQVAENPKELVVYGGIGRAARNWECYDKIVETLTRLEDDETLLVQSGKPVGVFKTHSNAPRVLIANSNLVPHWANWEHFNELDAKGLAMYGQMTAGSWIYIGSQGIVQGTYETFVEAGRQHYNGSLKGKWVLTAGLGGMGGAQPLAATLAGACSLNIECQQSRIDFRLETRYVDEQATDLDDALARIAKYTAEGKAISIALHGNAAEILPELVKRGVRPDMVTDQTSAHDPLNGYLPAGWTWEQYRDRAQTDPAAVVKAAKQSMAVHVKAMLDFQKQGIPTFDYGNNIRQMAKEEGVANAFDFPGFVPAYIRPLFCRGVGPFRWAALSGDAEDIYKTDAKVKELIPDDAHLHRWLDMARERISFQGLPARICWVGLGLRAKLGLAFNEMVRSGELSAPVVIGRDHLDSGSVSSPNRETEAMRDGSDAVSDWPLLNALLNTAGGATWVSLHHGGGVGMGFSQHSGMVIVCDGTDEAAERIARVLTNDPGTGVMRHADAGYQIAIDCAKEQGLDLPMITG.

Residues 53-54 (GG), Gln131, 177-179 (GMG), Glu197, Arg202, 243-244 (NA), 264-268 (QTSAH), 274-275 (YL), and Tyr323 each bind NAD(+). Cys411 is a catalytic residue. Gly493 is an NAD(+) binding site.

Belongs to the urocanase family. The cofactor is NAD(+).

The protein resides in the cytoplasm. It catalyses the reaction 4-imidazolone-5-propanoate = trans-urocanate + H2O. It functions in the pathway amino-acid degradation; L-histidine degradation into L-glutamate; N-formimidoyl-L-glutamate from L-histidine: step 2/3. Functionally, catalyzes the conversion of urocanate to 4-imidazolone-5-propionate. This is Urocanate hydratase from Pseudomonas entomophila (strain L48).